The sequence spans 361 residues: Dihydroorotate dehydrogenase (quinone) (361 aa).

FMN-binding positions include 67–71 (AGLDK) and threonine 91. Position 71 (lysine 71) interacts with substrate. 116 to 120 (NRMGF) provides a ligand contact to substrate. FMN-binding residues include asparagine 145 and asparagine 178. Residue asparagine 178 participates in substrate binding. Serine 181 acts as the Nucleophile in catalysis. A substrate-binding site is contributed by asparagine 183. Residues lysine 223 and glycine 251 each coordinate FMN. 252-253 (NT) is a substrate binding site. Residues glycine 273, glycine 302, and 323 to 324 (YT) each bind FMN.

This sequence belongs to the dihydroorotate dehydrogenase family. Type 2 subfamily. Monomer. The cofactor is FMN.

Its subcellular location is the cell membrane. The catalysed reaction is (S)-dihydroorotate + a quinone = orotate + a quinol. It participates in pyrimidine metabolism; UMP biosynthesis via de novo pathway; orotate from (S)-dihydroorotate (quinone route): step 1/1. In terms of biological role, catalyzes the conversion of dihydroorotate to orotate with quinone as electron acceptor. The sequence is that of Dihydroorotate dehydrogenase (quinone) from Deinococcus geothermalis (strain DSM 11300 / CIP 105573 / AG-3a).